The following is a 124-amino-acid chain: Small ribosomal subunit protein bS6 (124 aa).

It belongs to the bacterial ribosomal protein bS6 family.

Its function is as follows. Binds together with bS18 to 16S ribosomal RNA. This chain is Small ribosomal subunit protein bS6, found in Campylobacter lari (strain RM2100 / D67 / ATCC BAA-1060).